Here is a 184-residue protein sequence, read N- to C-terminus: GTP cyclohydrolase 1 (184 aa).

Cys-75, His-78, and Cys-146 together coordinate Zn(2+).

The protein belongs to the GTP cyclohydrolase I family. Homomer.

It carries out the reaction GTP + H2O = 7,8-dihydroneopterin 3'-triphosphate + formate + H(+). The protein operates within cofactor biosynthesis; 7,8-dihydroneopterin triphosphate biosynthesis; 7,8-dihydroneopterin triphosphate from GTP: step 1/1. This chain is GTP cyclohydrolase 1, found in Streptococcus pneumoniae (strain ATCC 700669 / Spain 23F-1).